The sequence spans 211 residues: Superoxide dismutase [Fe] (211 aa).

Fe cation-binding residues include H34, H85, D171, and H175.

Belongs to the iron/manganese superoxide dismutase family. As to quaternary structure, homotetramer at high temperature; homodimer at room temperature. The cofactor is Fe cation.

Its subcellular location is the cytoplasm. It carries out the reaction 2 superoxide + 2 H(+) = H2O2 + O2. Destroys superoxide anion radicals which are normally produced within the cells and which are toxic to biological systems. The chain is Superoxide dismutase [Fe] (sod) from Sulfolobus acidocaldarius (strain ATCC 33909 / DSM 639 / JCM 8929 / NBRC 15157 / NCIMB 11770).